Consider the following 77-residue polypeptide: MLALTRKAGERIVIGDNIVVTVVSIKGDSIRLTIDAPKEVKIYRGEIYDAIAAENKEAAVPMDLTELTALKEFHIRK.

Belongs to the CsrA/RsmA family. Homodimer; the beta-strands of each monomer intercalate to form a hydrophobic core, while the alpha-helices form wings that extend away from the core.

The protein localises to the cytoplasm. Its function is as follows. A translational regulator that binds mRNA to regulate translation initiation and/or mRNA stability. Usually binds in the 5'-UTR at or near the Shine-Dalgarno sequence preventing ribosome-binding, thus repressing translation. Its main target seems to be the major flagellin gene, while its function is anatagonized by FliW. The protein is Translational regulator CsrA of Desulfitobacterium hafniense (strain Y51).